A 668-amino-acid chain; its full sequence is Pentatricopeptide repeat-containing protein CRP1, chloroplastic (668 aa).

A chloroplast-targeting transit peptide spans Met1 to Pro64. PPR repeat units lie at residues Ser154–Pro188, Asp189–Pro226, Asp227–Pro261, Arg262–Pro297, Arg298–Pro332, Asp333–Pro367, Ser368–Pro402, Asp403–Pro437, Asp438–Pro472, Gly473–Pro507, Asn508–Pro542, Ser543–Val577, Ser578–Pro612, and Asp613–Pro647.

The protein belongs to the PPR family. P subfamily. In terms of assembly, component of a multisubunit complex.

Its subcellular location is the plastid. The protein localises to the chloroplast stroma. In terms of biological role, required for the translation of the chloroplast petA and petD mRNAs. Required for the processing of the petD mRNA from a polycistronic precursor. Binds with high affinity to the 5'-UTR of the chloroplastic petA transcript. Activates psaC and petA translation by binding their 5'-UTRs. This is Pentatricopeptide repeat-containing protein CRP1, chloroplastic from Zea mays (Maize).